We begin with the raw amino-acid sequence, 216 residues long: Small ribosomal subunit protein uS3 (216 aa).

One can recognise a KH type-2 domain in the interval isoleucine 24 to serine 93.

Belongs to the universal ribosomal protein uS3 family. Part of the 30S ribosomal subunit.

In terms of biological role, binds the lower part of the 30S subunit head. This Pyrobaculum calidifontis (strain DSM 21063 / JCM 11548 / VA1) protein is Small ribosomal subunit protein uS3.